Consider the following 149-residue polypeptide: Transcriptional repressor NrdR (149 aa).

A zinc finger spans residues 3-34 (CPFCSAVDTKVIDSRLVGEGSSVRRRRQCLVC). An ATP-cone domain is found at 49–139 (PRVVKSNDVR…VYRSFEDIKE (91 aa)).

This sequence belongs to the NrdR family. Zn(2+) serves as cofactor.

Its function is as follows. Negatively regulates transcription of bacterial ribonucleotide reductase nrd genes and operons by binding to NrdR-boxes. The polypeptide is Transcriptional repressor NrdR (Enterobacter sp. (strain 638)).